Here is a 417-residue protein sequence, read N- to C-terminus: UDP-N-acetylglucosamine 1-carboxyvinyltransferase (417 aa).

22–23 is a phosphoenolpyruvate binding site; it reads KN. R91 provides a ligand contact to UDP-N-acetyl-alpha-D-glucosamine. The active-site Proton donor is the C115. C115 bears the 2-(S-cysteinyl)pyruvic acid O-phosphothioketal mark. Residues 120-124, D304, and I326 contribute to the UDP-N-acetyl-alpha-D-glucosamine site; that span reads RPVDL.

It belongs to the EPSP synthase family. MurA subfamily.

The protein localises to the cytoplasm. It carries out the reaction phosphoenolpyruvate + UDP-N-acetyl-alpha-D-glucosamine = UDP-N-acetyl-3-O-(1-carboxyvinyl)-alpha-D-glucosamine + phosphate. It participates in cell wall biogenesis; peptidoglycan biosynthesis. Its function is as follows. Cell wall formation. Adds enolpyruvyl to UDP-N-acetylglucosamine. In Nitratidesulfovibrio vulgaris (strain ATCC 29579 / DSM 644 / CCUG 34227 / NCIMB 8303 / VKM B-1760 / Hildenborough) (Desulfovibrio vulgaris), this protein is UDP-N-acetylglucosamine 1-carboxyvinyltransferase.